Consider the following 123-residue polypeptide: Large ribosomal subunit protein uL14 (123 aa).

Belongs to the universal ribosomal protein uL14 family. As to quaternary structure, part of the 50S ribosomal subunit. Forms a cluster with proteins L3 and L19. In the 70S ribosome, L14 and L19 interact and together make contacts with the 16S rRNA in bridges B5 and B8.

In terms of biological role, binds to 23S rRNA. Forms part of two intersubunit bridges in the 70S ribosome. The polypeptide is Large ribosomal subunit protein uL14 (Citrobacter koseri (strain ATCC BAA-895 / CDC 4225-83 / SGSC4696)).